The primary structure comprises 370 residues: MNRRKNDFLVRPKRIRCYTQLSTLPIDLIIEILSRLPMNSIAICRLVSKQWASILQSSDFTESFLIKSPPRPRLLFTIRYGSKWHLFSAPQPRNFDENFPVVATDYHKGFSGNWCMQSFQLVNGFIYLNNRLSLKGKIDRVSVIWNPSTGQQIPLPDLGVKNSHSKSFFGYDPIEKQFKVLCITSSKEHQVLTLGTGRKLSWRKIEYSYPHYPRKKSNGICINGVLYYRNTNAMIVRFDVRSEEFRFVEIKMYVEILSLINYKGKLGVLFPNTDLAQLWVLDDTNKVEWSKHNFVFPDTTFEAIRATDTGEMFCASSCWRDSLYVSYYDLEKESVKKVKIKGIEDKLSIGKHHANEFFIFPNHVENVMVL.

The F-box domain maps to Tyr-18–Phe-64.

The sequence is that of Putative F-box protein At1g46984 from Arabidopsis thaliana (Mouse-ear cress).